A 554-amino-acid polypeptide reads, in one-letter code: Glucose-6-phosphate isomerase (554 aa).

Catalysis depends on glutamate 359, which acts as the Proton donor. Active-site residues include histidine 390 and lysine 518.

Belongs to the GPI family.

The protein localises to the cytoplasm. The catalysed reaction is alpha-D-glucose 6-phosphate = beta-D-fructose 6-phosphate. The protein operates within carbohydrate biosynthesis; gluconeogenesis. Its pathway is carbohydrate degradation; glycolysis; D-glyceraldehyde 3-phosphate and glycerone phosphate from D-glucose: step 2/4. In terms of biological role, catalyzes the reversible isomerization of glucose-6-phosphate to fructose-6-phosphate. This chain is Glucose-6-phosphate isomerase, found in Pseudomonas aeruginosa (strain LESB58).